The chain runs to 196 residues: MNDAINHTACETLFTQARTHNGWLDKPVSDAQLQAVWDLMKMGPTSANCSPARIVFVRSAEGKEKLRPTLSSGNLQKTMQAPVTAIVAWDSAFYDRLPTLFPHGDARSWFTSSPQLAEETAFRNSSLQAAYLIFACRARGLDTGPMSGFDREKVDAAFFADNGWKSNLLVNIGYGDPGKLYGRLPRLSFDEACLLA.

It belongs to the nitroreductase family. HadB/RutE subfamily. The cofactor is FMN.

It carries out the reaction 3-hydroxypropanoate + NADP(+) = 3-oxopropanoate + NADPH + H(+). Functionally, may reduce toxic product malonic semialdehyde to 3-hydroxypropionic acid, which is excreted. This Klebsiella pneumoniae subsp. pneumoniae (strain ATCC 700721 / MGH 78578) protein is Probable malonic semialdehyde reductase RutE.